We begin with the raw amino-acid sequence, 337 residues long: Holliday junction branch migration complex subunit RuvB (337 aa).

The segment at 1–27 (MIEADRLVHAQPQGTEERDEQIDRAMR) is disordered. Positions 4–187 (ADRLVHAQPQ…FGIPLRLEFY (184 aa)) are large ATPase domain (RuvB-L). ATP-binding positions include arginine 27, glycine 68, lysine 71, threonine 72, threonine 73, 134-136 (EDY), arginine 177, tyrosine 187, and arginine 224. Residue threonine 72 participates in Mg(2+) binding. Positions 188–258 (NVKDLSSIVT…VAESALDMLD (71 aa)) are small ATPAse domain (RuvB-S). The interval 261–337 (VEGFDYMDRK…YQHFNLIQPE (77 aa)) is head domain (RuvB-H). 3 residues coordinate DNA: arginine 297, arginine 316, and arginine 321.

This sequence belongs to the RuvB family. In terms of assembly, homohexamer. Forms an RuvA(8)-RuvB(12)-Holliday junction (HJ) complex. HJ DNA is sandwiched between 2 RuvA tetramers; dsDNA enters through RuvA and exits via RuvB. An RuvB hexamer assembles on each DNA strand where it exits the tetramer. Each RuvB hexamer is contacted by two RuvA subunits (via domain III) on 2 adjacent RuvB subunits; this complex drives branch migration. In the full resolvosome a probable DNA-RuvA(4)-RuvB(12)-RuvC(2) complex forms which resolves the HJ.

The protein localises to the cytoplasm. It carries out the reaction ATP + H2O = ADP + phosphate + H(+). In terms of biological role, the RuvA-RuvB-RuvC complex processes Holliday junction (HJ) DNA during genetic recombination and DNA repair, while the RuvA-RuvB complex plays an important role in the rescue of blocked DNA replication forks via replication fork reversal (RFR). RuvA specifically binds to HJ cruciform DNA, conferring on it an open structure. The RuvB hexamer acts as an ATP-dependent pump, pulling dsDNA into and through the RuvAB complex. RuvB forms 2 homohexamers on either side of HJ DNA bound by 1 or 2 RuvA tetramers; 4 subunits per hexamer contact DNA at a time. Coordinated motions by a converter formed by DNA-disengaged RuvB subunits stimulates ATP hydrolysis and nucleotide exchange. Immobilization of the converter enables RuvB to convert the ATP-contained energy into a lever motion, pulling 2 nucleotides of DNA out of the RuvA tetramer per ATP hydrolyzed, thus driving DNA branch migration. The RuvB motors rotate together with the DNA substrate, which together with the progressing nucleotide cycle form the mechanistic basis for DNA recombination by continuous HJ branch migration. Branch migration allows RuvC to scan DNA until it finds its consensus sequence, where it cleaves and resolves cruciform DNA. The protein is Holliday junction branch migration complex subunit RuvB of Shewanella loihica (strain ATCC BAA-1088 / PV-4).